Here is a 143-residue protein sequence, read N- to C-terminus: Transcription antitermination protein NusB (143 aa).

It belongs to the NusB family.

Functionally, involved in transcription antitermination. Required for transcription of ribosomal RNA (rRNA) genes. Binds specifically to the boxA antiterminator sequence of the ribosomal RNA (rrn) operons. The chain is Transcription antitermination protein NusB from Streptomyces griseus subsp. griseus (strain JCM 4626 / CBS 651.72 / NBRC 13350 / KCC S-0626 / ISP 5235).